A 126-amino-acid polypeptide reads, in one-letter code: Fluoride-specific ion channel FluC 2 (126 aa).

4 consecutive transmembrane segments (helical) span residues 11 to 31 (VLLI…ICEH), 36 to 56 (LGIL…MYDA), 69 to 89 (AFGT…VQSF), and 93 to 113 (FLPA…GVFF). Positions 76 and 79 each coordinate Na(+).

The protein belongs to the fluoride channel Fluc/FEX (TC 1.A.43) family.

Its subcellular location is the cell membrane. The enzyme catalyses fluoride(in) = fluoride(out). Its activity is regulated as follows. Na(+) is not transported, but it plays an essential structural role and its presence is essential for fluoride channel function. Its function is as follows. Fluoride-specific ion channel. Important for reducing fluoride concentration in the cell, thus reducing its toxicity. The chain is Fluoride-specific ion channel FluC 2 from Methanosarcina mazei (strain ATCC BAA-159 / DSM 3647 / Goe1 / Go1 / JCM 11833 / OCM 88) (Methanosarcina frisia).